A 610-amino-acid polypeptide reads, in one-letter code: DNA mismatch repair protein MutL (610 aa).

The protein belongs to the DNA mismatch repair MutL/HexB family.

Its function is as follows. This protein is involved in the repair of mismatches in DNA. It is required for dam-dependent methyl-directed DNA mismatch repair. May act as a 'molecular matchmaker', a protein that promotes the formation of a stable complex between two or more DNA-binding proteins in an ATP-dependent manner without itself being part of a final effector complex. This Rickettsia canadensis (strain McKiel) protein is DNA mismatch repair protein MutL.